A 351-amino-acid chain; its full sequence is 3-dehydroquinate synthase (351 aa).

NAD(+) is bound by residues 60-65, 94-98, 118-119, K131, K140, and 158-161; these read DGEEYK, GVISD, TT, and FLKT. Zn(2+) contacts are provided by E173, H239, and H256.

This sequence belongs to the sugar phosphate cyclases superfamily. Dehydroquinate synthase family. Requires Co(2+) as cofactor. The cofactor is Zn(2+). NAD(+) is required as a cofactor.

Its subcellular location is the cytoplasm. The catalysed reaction is 7-phospho-2-dehydro-3-deoxy-D-arabino-heptonate = 3-dehydroquinate + phosphate. The protein operates within metabolic intermediate biosynthesis; chorismate biosynthesis; chorismate from D-erythrose 4-phosphate and phosphoenolpyruvate: step 2/7. In terms of biological role, catalyzes the conversion of 3-deoxy-D-arabino-heptulosonate 7-phosphate (DAHP) to dehydroquinate (DHQ). The chain is 3-dehydroquinate synthase from Campylobacter jejuni subsp. jejuni serotype O:23/36 (strain 81-176).